Reading from the N-terminus, the 177-residue chain is Large ribosomal subunit protein uL6 (177 aa).

It belongs to the universal ribosomal protein uL6 family. In terms of assembly, part of the 50S ribosomal subunit.

Its function is as follows. This protein binds to the 23S rRNA, and is important in its secondary structure. It is located near the subunit interface in the base of the L7/L12 stalk, and near the tRNA binding site of the peptidyltransferase center. The polypeptide is Large ribosomal subunit protein uL6 (Polaromonas naphthalenivorans (strain CJ2)).